We begin with the raw amino-acid sequence, 212 residues long: RNA chaperone ProQ (212 aa).

The tract at residues 114-149 (RIAKAGKTSAPAANAKKPVKKPVARRPKAAPSAKPV) is disordered. Positions 118-129 (AGKTSAPAANAK) are enriched in low complexity. The segment covering 130 to 141 (KPVKKPVARRPK) has biased composition (basic residues).

The protein belongs to the ProQ family.

Its subcellular location is the cytoplasm. Its function is as follows. RNA chaperone with significant RNA binding, RNA strand exchange and RNA duplexing activities. The protein is RNA chaperone ProQ of Shewanella piezotolerans (strain WP3 / JCM 13877).